The sequence spans 82 residues: Small ribosomal subunit protein bS18 (82 aa).

Residues 1 to 25 (MTEMNQTAIRRPFHRRRKTCPFSGT) are disordered.

This sequence belongs to the bacterial ribosomal protein bS18 family. In terms of assembly, part of the 30S ribosomal subunit. Forms a tight heterodimer with protein bS6.

Its function is as follows. Binds as a heterodimer with protein bS6 to the central domain of the 16S rRNA, where it helps stabilize the platform of the 30S subunit. This is Small ribosomal subunit protein bS18 from Bartonella henselae (strain ATCC 49882 / DSM 28221 / CCUG 30454 / Houston 1) (Rochalimaea henselae).